Here is a 430-residue protein sequence, read N- to C-terminus: KIN17-like protein (430 aa).

The segment at 28-50 (CQMCQKQCRDENGFKCHCMSESH) adopts a C2H2-type zinc-finger fold. The segment at 51–160 (QRQMQVFGQA…KARLKRKRIK (110 aa)) is winged helix-turn-helix (wHTH). Residues 147 to 183 (EQAVKARLKRKRIKSDLAEDERQERMIARQIERAQQS) adopt a coiled-coil conformation. A Nuclear localization signal (NLS) motif is present at residues 155–158 (KRKR). Disordered regions lie at residues 179 to 230 (RAQQ…ANKA) and 261 to 284 (EEED…GKDA). Positions 191-224 (LGDDASPDGSEGESGSEDEYSDSENDHEGQEEDA) are enriched in acidic residues. Residues 261 to 278 (EEEDEVSARDKEKEELAK) are compositionally biased toward basic and acidic residues. Positions 283–312 (DAINAAEARRSALDELMKEEEKAKERSNRK) form a coiled coil. The tract at residues 319 to 370 (GIVVKVMSKSLAEKGYCKQKGVVKRVIDKYVGEIEMLESKHVLRVDQDELET) is C-terminal subdomain A. The C-terminal subdomain B stretch occupies residues 376–427 (GGLVRIVNGAYRGSNARLLSVDTERFCAKVQVEKGLYDGKVLKAIEYEDICK).

This sequence belongs to the KIN17 family.

Its subcellular location is the nucleus. The protein is KIN17-like protein of Oryza sativa subsp. japonica (Rice).